The chain runs to 67 residues: Ferredoxin (67 aa).

4Fe-4S ferredoxin-type domains lie at 3–31 (WKVSVDQDTCIGDAICASLCPDVFEMNDE) and 36–67 (PKVEIIEDEELYNCAKEAMESCPVSAITIEEA). Positions 12, 15, and 18 each coordinate [4Fe-4S] cluster. Cys-22 and Cys-49 form a disulfide bridge. A [4Fe-4S] cluster-binding site is contributed by Cys-57.

It depends on [4Fe-4S] cluster as a cofactor. [3Fe-4S] cluster is required as a cofactor.

Its function is as follows. Ferredoxins are iron-sulfur proteins that transfer electrons in a wide variety of metabolic reactions. This is Ferredoxin (fdxA) from Pyrococcus abyssi (strain GE5 / Orsay).